Here is a 171-residue protein sequence, read N- to C-terminus: Transcription factor E (171 aa).

Residues 1–81 form the HTH TFE/IIEalpha-type domain; that stretch reads MLNLAKELVG…YWKVNVNQIN (81 aa).

The protein belongs to the TFE family. In terms of assembly, monomer. Interaction with RNA polymerase subunits RpoF and RpoE is necessary for Tfe stimulatory transcription activity. Able to interact with Tbp and RNA polymerase in the absence of DNA promoter. Interacts both with the preinitiation and elongation complexes.

Its function is as follows. Transcription factor that plays a role in the activation of archaeal genes transcribed by RNA polymerase. Facilitates transcription initiation by enhancing TATA-box recognition by TATA-box-binding protein (Tbp), and transcription factor B (Tfb) and RNA polymerase recruitment. Not absolutely required for transcription in vitro, but particularly important in cases where Tbp or Tfb function is not optimal. It dynamically alters the nucleic acid-binding properties of RNA polymerases by stabilizing the initiation complex and destabilizing elongation complexes. Seems to translocate with the RNA polymerase following initiation and acts by binding to the non template strand of the transcription bubble in elongation complexes. The polypeptide is Transcription factor E (Sulfolobus acidocaldarius (strain ATCC 33909 / DSM 639 / JCM 8929 / NBRC 15157 / NCIMB 11770)).